We begin with the raw amino-acid sequence, 294 residues long: Small ribosomal subunit protein uS2 (294 aa).

Over residues 232-245 the composition is skewed to basic and acidic residues; it reads RAAEQDKAADDKAQ. The disordered stretch occupies residues 232–294; that stretch reads RAAEQDKAAD…GSEEDGEAAN (63 aa). The segment covering 246–265 has biased composition (low complexity); it reads EQAAAEAAKPEPAAPAPAAE.

Belongs to the universal ribosomal protein uS2 family.

The polypeptide is Small ribosomal subunit protein uS2 (Desulfatibacillum aliphaticivorans).